Here is a 371-residue protein sequence, read N- to C-terminus: 3-methyl-D-ornithine--L-lysine ligase (371 aa).

ATP is bound at residue Lys-18. L-lysine is bound at residue 19–20 (LQ). Residues Asp-39, 57 to 58 (NI), and 80 to 81 (EN) each bind ATP. Glu-80 is a binding site for L-lysine. The 185-residue stretch at 93-277 (EKFSCPVLFD…LIELLFRAFN (185 aa)) folds into the ATP-grasp domain. ADP contacts are provided by residues Lys-112, Lys-139, Ser-146, and 168–171 (EEYV). Residues 177-179 (SLE) and Asp-233 contribute to the D-ornithine site. Glu-235, Glu-247, and Asp-249 together coordinate Mg(2+). An ADP-binding site is contributed by Glu-247. D-ornithine contacts are provided by residues 251–256 (RFPSQT) and Glu-310. Residues Ser-254 and Glu-310 each coordinate L-lysine.

This sequence belongs to the PylC family. Mg(2+) is required as a cofactor.

The enzyme catalyses (3R)-3-methyl-D-ornithine + L-lysine + ATP = (3R)-3-methyl-D-ornithyl-N(6)-L-lysine + ADP + phosphate + H(+). It functions in the pathway amino-acid biosynthesis; L-pyrrolysine biosynthesis. Its function is as follows. Is required for the biosynthesis of pyrrolysine. Catalyzes the ATP-dependent ligation between (3R)-3-methyl-D-ornithine and L-lysine, leading to (3R)-3-methyl-D-ornithyl-N6-L-lysine. Is also involved in the synthesis of pyrroline-carboxy-lysine (Pcl), a demethylated form of pyrrolysine that is generated by the pyrrolysine biosynthetic enzymes when the growth media is supplemented with D-ornithine. This Methanosarcina mazei (strain ATCC BAA-159 / DSM 3647 / Goe1 / Go1 / JCM 11833 / OCM 88) (Methanosarcina frisia) protein is 3-methyl-D-ornithine--L-lysine ligase.